The primary structure comprises 287 residues: Pyridoxal kinase PdxY (287 aa).

Substrate contacts are provided by residues serine 9 and 44–45 (MQ). ATP-binding residues include aspartate 111, alanine 142, glutamate 147, and lysine 180. Residue aspartate 221 coordinates substrate.

The protein belongs to the pyridoxine kinase family. PdxY subfamily. As to quaternary structure, homodimer. The cofactor is Mg(2+).

The catalysed reaction is pyridoxal + ATP = pyridoxal 5'-phosphate + ADP + H(+). The protein operates within cofactor metabolism; pyridoxal 5'-phosphate salvage; pyridoxal 5'-phosphate from pyridoxal: step 1/1. In terms of biological role, pyridoxal kinase involved in the salvage pathway of pyridoxal 5'-phosphate (PLP). Catalyzes the phosphorylation of pyridoxal to PLP. The sequence is that of Pyridoxal kinase PdxY from Burkholderia mallei (strain ATCC 23344).